A 388-amino-acid polypeptide reads, in one-letter code: Succinate--CoA ligase [ADP-forming] subunit beta (388 aa).

The region spanning 9-244 (KQLFARYGLP…QSQEDPREAQ (236 aa)) is the ATP-grasp domain. Residues Lys-46, 53–55 (GRG), Glu-99, Thr-102, and Glu-107 each bind ATP. Asn-199 and Asp-213 together coordinate Mg(2+). Substrate-binding positions include Asn-264 and 321–323 (GIV).

Belongs to the succinate/malate CoA ligase beta subunit family. In terms of assembly, heterotetramer of two alpha and two beta subunits. It depends on Mg(2+) as a cofactor.

It carries out the reaction succinate + ATP + CoA = succinyl-CoA + ADP + phosphate. The enzyme catalyses GTP + succinate + CoA = succinyl-CoA + GDP + phosphate. The protein operates within carbohydrate metabolism; tricarboxylic acid cycle; succinate from succinyl-CoA (ligase route): step 1/1. Functionally, succinyl-CoA synthetase functions in the citric acid cycle (TCA), coupling the hydrolysis of succinyl-CoA to the synthesis of either ATP or GTP and thus represents the only step of substrate-level phosphorylation in the TCA. The beta subunit provides nucleotide specificity of the enzyme and binds the substrate succinate, while the binding sites for coenzyme A and phosphate are found in the alpha subunit. The protein is Succinate--CoA ligase [ADP-forming] subunit beta of Salmonella dublin (strain CT_02021853).